Reading from the N-terminus, the 386-residue chain is 1-deoxy-D-xylulose 5-phosphate reductoisomerase (386 aa).

Residues T7, G8, S9, I10, A33, and N124 each contribute to the NADPH site. Residue K125 participates in 1-deoxy-D-xylulose 5-phosphate binding. E126 is a binding site for NADPH. D148 is a binding site for Mn(2+). 1-deoxy-D-xylulose 5-phosphate is bound by residues S149, E150, S174, and H197. E150 serves as a coordination point for Mn(2+). G203 lines the NADPH pocket. 1-deoxy-D-xylulose 5-phosphate contacts are provided by S210, N215, K216, and E219. E219 contributes to the Mn(2+) binding site.

It belongs to the DXR family. Mg(2+) is required as a cofactor. It depends on Mn(2+) as a cofactor.

The catalysed reaction is 2-C-methyl-D-erythritol 4-phosphate + NADP(+) = 1-deoxy-D-xylulose 5-phosphate + NADPH + H(+). It participates in isoprenoid biosynthesis; isopentenyl diphosphate biosynthesis via DXP pathway; isopentenyl diphosphate from 1-deoxy-D-xylulose 5-phosphate: step 1/6. Its function is as follows. Catalyzes the NADPH-dependent rearrangement and reduction of 1-deoxy-D-xylulose-5-phosphate (DXP) to 2-C-methyl-D-erythritol 4-phosphate (MEP). The protein is 1-deoxy-D-xylulose 5-phosphate reductoisomerase of Kitasatospora griseola (Streptomyces griseolosporeus).